The sequence spans 198 residues: NAD(P)H dehydrogenase (quinone) (198 aa).

The Flavodoxin-like domain maps to 4 to 189; it reads VLVLYYSMYG…SIARYQGEYV (186 aa). Residues 10–15 and 78–80 each bind FMN; these read SMYGHI and TRF. Y12 is an NAD(+) binding site. Substrate is bound at residue W98. Residues 113–118 and H133 each bind FMN; that span reads STGTGG.

It belongs to the WrbA family. Requires FMN as cofactor.

It catalyses the reaction a quinone + NADH + H(+) = a quinol + NAD(+). The catalysed reaction is a quinone + NADPH + H(+) = a quinol + NADP(+). The polypeptide is NAD(P)H dehydrogenase (quinone) (Escherichia fergusonii (strain ATCC 35469 / DSM 13698 / CCUG 18766 / IAM 14443 / JCM 21226 / LMG 7866 / NBRC 102419 / NCTC 12128 / CDC 0568-73)).